We begin with the raw amino-acid sequence, 211 residues long: Small ribosomal subunit protein bS6c alpha (211 aa).

Low complexity predominate over residues Met-1–Leu-19. Disordered regions lie at residues Met-1 to Pro-25 and Asp-80 to Gln-100. A chloroplast-targeting transit peptide spans Met-1–Leu-65.

This sequence belongs to the bacterial ribosomal protein bS6 family. In terms of assembly, component of the chloroplast small ribosomal subunit (SSU). Mature 70S chloroplast ribosomes of higher plants consist of a small (30S) and a large (50S) subunit. The 30S small subunit contains 1 molecule of ribosomal RNA (16S rRNA) and 24 different proteins. The 50S large subunit contains 3 rRNA molecules (23S, 5S and 4.5S rRNA) and 33 different proteins.

The protein localises to the plastid. It localises to the chloroplast. In terms of biological role, component of the chloroplast ribosome (chloro-ribosome), a dedicated translation machinery responsible for the synthesis of chloroplast genome-encoded proteins, including proteins of the transcription and translation machinery and components of the photosynthetic apparatus. This Spinacia oleracea (Spinach) protein is Small ribosomal subunit protein bS6c alpha (RPS6).